The sequence spans 229 residues: UPF0758 protein CLL_A0562 (229 aa).

Positions 107–229 (KIMSPNDLAM…FISLKEKGFI (123 aa)) constitute an MPN domain. The Zn(2+) site is built by H178, H180, and D191. The JAMM motif motif lies at 178–191 (HNHPSGDPTPSKED).

Belongs to the UPF0758 family.

The protein is UPF0758 protein CLL_A0562 of Clostridium botulinum (strain Eklund 17B / Type B).